The following is a 169-amino-acid chain: Lipoprotein signal peptidase (169 aa).

Transmembrane regions (helical) follow at residues 10-30 (LPWL…KAFF), 40-60 (IVVI…AAFS), 68-88 (WQRW…VVWL), and 94-114 (GETW…GNLY). Catalysis depends on residues Asp-124 and Asp-143. The chain crosses the membrane as a helical span at residues 135-155 (YFPAFNLADSAITVGAVMLAL).

It belongs to the peptidase A8 family.

The protein localises to the cell inner membrane. The enzyme catalyses Release of signal peptides from bacterial membrane prolipoproteins. Hydrolyzes -Xaa-Yaa-Zaa-|-(S,diacylglyceryl)Cys-, in which Xaa is hydrophobic (preferably Leu), and Yaa (Ala or Ser) and Zaa (Gly or Ala) have small, neutral side chains.. It participates in protein modification; lipoprotein biosynthesis (signal peptide cleavage). Its function is as follows. This protein specifically catalyzes the removal of signal peptides from prolipoproteins. The polypeptide is Lipoprotein signal peptidase (Pseudomonas aeruginosa (strain UCBPP-PA14)).